A 180-amino-acid chain; its full sequence is ATP-dependent protease subunit HslV (180 aa).

The active site involves Thr-5. Gly-161, Cys-164, and Thr-167 together coordinate Na(+).

It belongs to the peptidase T1B family. HslV subfamily. A double ring-shaped homohexamer of HslV is capped on each side by a ring-shaped HslU homohexamer. The assembly of the HslU/HslV complex is dependent on binding of ATP.

It localises to the cytoplasm. The catalysed reaction is ATP-dependent cleavage of peptide bonds with broad specificity.. Its activity is regulated as follows. Allosterically activated by HslU binding. Its function is as follows. Protease subunit of a proteasome-like degradation complex believed to be a general protein degrading machinery. This chain is ATP-dependent protease subunit HslV, found in Campylobacter curvus (strain 525.92).